The chain runs to 375 residues: Tyrosine--tRNA ligase (375 aa).

L-tyrosine-binding residues include Y37, Y168, Q172, D175, and Q190. Positions 251–255 (KMSKS) match the 'KMSKS' region motif. Position 254 (K254) interacts with ATP.

The protein belongs to the class-I aminoacyl-tRNA synthetase family. TyrS type 4 subfamily. In terms of assembly, homodimer.

It is found in the cytoplasm. It carries out the reaction tRNA(Tyr) + L-tyrosine + ATP = L-tyrosyl-tRNA(Tyr) + AMP + diphosphate + H(+). Its function is as follows. Catalyzes the attachment of tyrosine to tRNA(Tyr) in a two-step reaction: tyrosine is first activated by ATP to form Tyr-AMP and then transferred to the acceptor end of tRNA(Tyr). The polypeptide is Tyrosine--tRNA ligase (Thermococcus gammatolerans (strain DSM 15229 / JCM 11827 / EJ3)).